We begin with the raw amino-acid sequence, 253 residues long: Large ribosomal subunit protein uL4 (253 aa).

Positions 61-107 (GWGSGRGTSHVPRLVNSSRAARVPHARGGRRAHPPKPEADRSEKVNT) are disordered. Positions 82 to 94 (RVPHARGGRRAHP) are enriched in basic residues. The segment covering 95–107 (PKPEADRSEKVNT) has biased composition (basic and acidic residues).

Belongs to the universal ribosomal protein uL4 family. In terms of assembly, part of the 50S ribosomal subunit.

Its function is as follows. One of the primary rRNA binding proteins, this protein initially binds near the 5'-end of the 23S rRNA. It is important during the early stages of 50S assembly. It makes multiple contacts with different domains of the 23S rRNA in the assembled 50S subunit and ribosome. Functionally, forms part of the polypeptide exit tunnel. The polypeptide is Large ribosomal subunit protein uL4 (Methanosarcina barkeri (strain Fusaro / DSM 804)).